The chain runs to 240 residues: Protein UL136 (240 aa).

Residues 69-89 form a helical membrane-spanning segment; sequence VICAVLLTLMIMAIGALIAYL. Disordered regions lie at residues 119 to 143 and 164 to 200; these read ERQRSRRRAMDVPDPELGDPARRPL and TRPAPPALSSPETGDDSNDDAVAGGGAGGVTSSATRT.

Belongs to the HHV-5 UL136 protein family. Interacts with host ATP1B1.

It is found in the host membrane. In Human cytomegalovirus (strain Merlin) (HHV-5), this protein is Protein UL136 (UL136).